Consider the following 66-residue polypeptide: UPF0434 protein Mnod_1613 (66 aa).

It belongs to the UPF0434 family.

This is UPF0434 protein Mnod_1613 from Methylobacterium nodulans (strain LMG 21967 / CNCM I-2342 / ORS 2060).